We begin with the raw amino-acid sequence, 174 residues long: Crossover junction endodeoxyribonuclease RuvC (174 aa).

Residues Asp8, Glu67, and Asp139 contribute to the active site. Asp8, Glu67, and Asp139 together coordinate Mg(2+).

Belongs to the RuvC family. Homodimer which binds Holliday junction (HJ) DNA. The HJ becomes 2-fold symmetrical on binding to RuvC with unstacked arms; it has a different conformation from HJ DNA in complex with RuvA. In the full resolvosome a probable DNA-RuvA(4)-RuvB(12)-RuvC(2) complex forms which resolves the HJ. It depends on Mg(2+) as a cofactor.

Its subcellular location is the cytoplasm. It catalyses the reaction Endonucleolytic cleavage at a junction such as a reciprocal single-stranded crossover between two homologous DNA duplexes (Holliday junction).. In terms of biological role, the RuvA-RuvB-RuvC complex processes Holliday junction (HJ) DNA during genetic recombination and DNA repair. Endonuclease that resolves HJ intermediates. Cleaves cruciform DNA by making single-stranded nicks across the HJ at symmetrical positions within the homologous arms, yielding a 5'-phosphate and a 3'-hydroxyl group; requires a central core of homology in the junction. The consensus cleavage sequence is 5'-(A/T)TT(C/G)-3'. Cleavage occurs on the 3'-side of the TT dinucleotide at the point of strand exchange. HJ branch migration catalyzed by RuvA-RuvB allows RuvC to scan DNA until it finds its consensus sequence, where it cleaves and resolves the cruciform DNA. This chain is Crossover junction endodeoxyribonuclease RuvC, found in Pseudomonas entomophila (strain L48).